Here is a 402-residue protein sequence, read N- to C-terminus: F-box/kelch-repeat protein At4g39590 (402 aa).

Positions 1-14 are enriched in low complexity; that stretch reads MFPMSSTSRSSAAN. Residues 1–37 are disordered; sequence MFPMSSTSRSSAANNRKDPPRKKNKETPSPVTREPTS. A compositionally biased stretch (polar residues) spans 27 to 37; sequence TPSPVTREPTS. Positions 35–81 constitute an F-box domain; sequence PTSIDSLPNDLLLNCFARVSRMYYPALSRVSKRFRSIVTSPEIYNTR. Kelch repeat units follow at residues 143 to 198, 199 to 246, 255 to 300, and 302 to 341; these read NIYR…VVDG, KIYV…YRRA, KLYL…LFYW, and QGVFKWYDSKVSSWKQLKGLEGLPDDFSQREYCKLVDLGG.

This chain is F-box/kelch-repeat protein At4g39590, found in Arabidopsis thaliana (Mouse-ear cress).